The following is a 523-amino-acid chain: 2-isopropylmalate synthase (523 aa).

The 263-residue stretch at 5 to 267 folds into the Pyruvate carboxyltransferase domain; sequence VIIFDTTLRD…HTRINHQEIW (263 aa). Residues Asp-14, His-202, His-204, and Asn-238 each contribute to the Mn(2+) site. The tract at residues 392–523 is regulatory domain; the sequence is RLEYFSVQSG…QNKEHNQETV (132 aa).

The protein belongs to the alpha-IPM synthase/homocitrate synthase family. LeuA type 1 subfamily. Homodimer. Mn(2+) serves as cofactor.

The protein localises to the cytoplasm. The catalysed reaction is 3-methyl-2-oxobutanoate + acetyl-CoA + H2O = (2S)-2-isopropylmalate + CoA + H(+). The protein operates within amino-acid biosynthesis; L-leucine biosynthesis; L-leucine from 3-methyl-2-oxobutanoate: step 1/4. In terms of biological role, catalyzes the condensation of the acetyl group of acetyl-CoA with 3-methyl-2-oxobutanoate (2-ketoisovalerate) to form 3-carboxy-3-hydroxy-4-methylpentanoate (2-isopropylmalate). The chain is 2-isopropylmalate synthase from Cronobacter sakazakii (strain ATCC BAA-894) (Enterobacter sakazakii).